A 509-amino-acid polypeptide reads, in one-letter code: MTSGGHIQLFIEHTRQIATAQGDIQLALQSMQQWREAFATALKQNTFDLTGWSPQTKIANQLKQFNHKLTTHVSNWDTEWHTFSAAQSVAEVFHDRVMLLVFGKFNAGKSSLCNLLAECFRSHEQTVQYFHVQNEQIFYTESHLREGATETTAQLQGVCLGEKLILLDTPGLHSGTQKNAALTQKFIDSADGVLWLSSATSPGQVQELDALGRELKRHKPLFPVITRSDFVEEDEIDGELCTVLCNKNSEQRALQESDVLMRAKEKLHSMQVDVSLLKPPVSVSTQMAREADMNPQAMNEAGFERLFAALLALIEPALRYKQRKPAEVLLHFLQEHIIEGLRFYLQPDLEQIQQDLKQAQDDLRQLHTDLAEAVWRSVLPELPQLLEQHASTQNIDAVVNSLNEWINVAFEQQLAIQLDAYGLNLDSLSKIEKTEKMQYERIAGMVVHDGLYTTLTQQIQQAVKASTSELIDQCQAQLEQSIKHVQTLDETFIDYSAALDQLSQALRIE.

Residues 108–225 form the G domain; that stretch reads GKSSLCNLLA…KRHKPLFPVI (118 aa).

This is an uncharacterized protein from Acinetobacter baylyi (strain ATCC 33305 / BD413 / ADP1).